Here is a 131-residue protein sequence, read N- to C-terminus: Protein ApaG (131 aa).

Residues 3 to 127 (RAVTRQIEVT…FSLDSPDGGK (125 aa)) form the ApaG domain.

In Bradyrhizobium sp. (strain BTAi1 / ATCC BAA-1182), this protein is Protein ApaG.